The chain runs to 395 residues: Secreted aspartyl protease 1 (395 aa).

A signal peptide spans 1–20; it reads MQLSIQAIIGFVVAAGLAVA. Positions 21–88 are cleaved as a propeptide — removed in mature form; the sequence is SELPSPMTVN…HLLLDLIDKR (68 aa). N-linked (GlcNAc...) asparagine glycosylation is present at Asn-41. The Peptidase A1 domain occupies 105–391; the sequence is WAGDVQFGQS…DMGKNRMGFA (287 aa). Residues Asp-121 and Asp-283 contribute to the active site. Cysteines 321 and 352 form a disulfide.

Belongs to the peptidase A1 family.

The protein resides in the secreted. Its activity is regulated as follows. Inhibited by pepstatin A. In terms of biological role, dominant secreted aspartyl protease that has a clear preference for aromatic residues in the P1' position directly adjacent to the cleavage site and, in particular, Trp. In addition, it generally cleaves peptides containing Lys, Arg, Phe, Tyr, or Nle (norleucine) in the P1 position, Nle and Glu at P2, and Arg and Val at P2'. Has important roles in facilitating the interaction of the yeast with the external environment. Is able to rapidly hydrolyze Staphylococcus aureus protein A, an important S.aureus virulence factor involved in immune evasion and biofilm formation. Shows anti-biofilm properties and thus plays a role in inter-kingdom interactions, beneficial for host skin health. The polypeptide is Secreted aspartyl protease 1 (Malassezia globosa (strain ATCC MYA-4612 / CBS 7966) (Dandruff-associated fungus)).